Here is a 135-residue protein sequence, read N- to C-terminus: MSAKPNYETMYILRPDIAEEEVESHANKYRDLVVEAGGEVIDSQMRGKRRLAYNIGKHREGIYIQLNYSGDGKQVGPLEKAMRLSEDVIRYLTVKYEGQHSSLGRSTAPANPMASNTPRTEGQEQAKTEPQTAPA.

Residues glutamine 99–threonine 120 are compositionally biased toward polar residues. The segment at glutamine 99 to alanine 135 is disordered.

The protein belongs to the bacterial ribosomal protein bS6 family.

In terms of biological role, binds together with bS18 to 16S ribosomal RNA. The protein is Small ribosomal subunit protein bS6 of Synechococcus sp. (strain RCC307).